The primary structure comprises 328 residues: uncharacterized protein (328 aa).

A disordered region spans residues 296–328 (APEGDLEDEIIEVDPEQPRDDPYRRLRTPPPGG). Residues 299–310 (GDLEDEIIEVDP) show a composition bias toward acidic residues.

In terms of biological role, possibly necessary for replication. This is an uncharacterized protein from Halobacterium sp. (strain GN101).